The primary structure comprises 92 residues: Defensin-like protein 96 (92 aa).

An N-terminal signal peptide occupies residues 1-29 (MGSLRLSTVAIAVVVCLSILLISPTEVDG). Disulfide bonds link C33–C80, C40–C65, C49–C77, and C53–C79.

This sequence belongs to the DEFL family.

Its subcellular location is the secreted. The chain is Defensin-like protein 96 from Arabidopsis thaliana (Mouse-ear cress).